The primary structure comprises 92 residues: Small ribosomal subunit protein uS19 (92 aa).

It belongs to the universal ribosomal protein uS19 family.

Functionally, protein S19 forms a complex with S13 that binds strongly to the 16S ribosomal RNA. This chain is Small ribosomal subunit protein uS19, found in Trichormus variabilis (strain ATCC 29413 / PCC 7937) (Anabaena variabilis).